A 216-amino-acid polypeptide reads, in one-letter code: MKLNVNPTRMELTKLKKRLTTATRGHKLLKDKQDELMRRFIGMIKKNNELRKDVEKELEGSFKDFLMASAVMSPEFLEEAVAYPKESISVDVKKQNIMSVNVPVFDFKRKLEGDKGSIFPYGFANTSAELDGAIEKLYGILPKLLELAKVEKACQLMADEIEKTRRRVNALEYMTIPQLEETIRFIQMKLDENERSTVTRLMKIKSMMEEKQSNMV.

This sequence belongs to the V-ATPase D subunit family.

Its function is as follows. Produces ATP from ADP in the presence of a proton gradient across the membrane. This is V-type ATP synthase subunit D from Clostridium botulinum (strain Loch Maree / Type A3).